The following is a 380-amino-acid chain: Protein arginine N-methyltransferase PRMT10 (380 aa).

Positions 26–357 (EVDFANYFCT…KENHRLMDME (332 aa)) constitute an SAM-dependent MTase PRMT-type domain. 5 residues coordinate S-adenosyl-L-methionine: glutamine 42, arginine 51, glycine 75, glutamate 97, and glutamate 126. Active-site residues include glutamate 140 and glutamate 149. The interval 187 to 227 (ENKMEDLEIAMHDWNLFVEDTESYYGVNMNVLTKAYRAEHE) is dimerization arm.

It belongs to the class I-like SAM-binding methyltransferase superfamily. Protein arginine N-methyltransferase family. Ring-like homodimer.

It catalyses the reaction L-arginyl-[protein] + 2 S-adenosyl-L-methionine = N(omega),N(omega)-dimethyl-L-arginyl-[protein] + 2 S-adenosyl-L-homocysteine + 2 H(+). Functionally, methylates (mono and asymmetric dimethylation) the guanidino nitrogens of arginyl residues in some proteins. This is Protein arginine N-methyltransferase PRMT10 (PRMT10) from Oryza sativa subsp. japonica (Rice).